A 633-amino-acid polypeptide reads, in one-letter code: 1-deoxy-D-xylulose-5-phosphate synthase 2 (633 aa).

Thiamine diphosphate-binding positions include histidine 73 and 113 to 115 (SHA). Aspartate 145 is a Mg(2+) binding site. Residues 146-147 (GA), asparagine 175, tyrosine 286, and glutamate 367 contribute to the thiamine diphosphate site. Asparagine 175 is a binding site for Mg(2+).

The protein belongs to the transketolase family. DXPS subfamily. Homodimer. Mg(2+) is required as a cofactor. The cofactor is thiamine diphosphate.

The enzyme catalyses D-glyceraldehyde 3-phosphate + pyruvate + H(+) = 1-deoxy-D-xylulose 5-phosphate + CO2. The protein operates within metabolic intermediate biosynthesis; 1-deoxy-D-xylulose 5-phosphate biosynthesis; 1-deoxy-D-xylulose 5-phosphate from D-glyceraldehyde 3-phosphate and pyruvate: step 1/1. Catalyzes the acyloin condensation reaction between C atoms 2 and 3 of pyruvate and glyceraldehyde 3-phosphate to yield 1-deoxy-D-xylulose-5-phosphate (DXP). In Kitasatospora griseola (Streptomyces griseolosporeus), this protein is 1-deoxy-D-xylulose-5-phosphate synthase 2.